Here is a 98-residue protein sequence, read N- to C-terminus: NADH-ubiquinone oxidoreductase chain 4L (98 aa).

Helical transmembrane passes span 2 to 22 (MMAVLNISLAFIFSLLGTLMF), 26 to 46 (LMSTLLCLEGMMLTLFIITTI), and 59 to 79 (IPIVILVFAACEAAVGLALLV).

The protein belongs to the complex I subunit 4L family. In terms of assembly, core subunit of respiratory chain NADH dehydrogenase (Complex I) which is composed of 45 different subunits.

It localises to the mitochondrion inner membrane. The enzyme catalyses a ubiquinone + NADH + 5 H(+)(in) = a ubiquinol + NAD(+) + 4 H(+)(out). Core subunit of the mitochondrial membrane respiratory chain NADH dehydrogenase (Complex I) which catalyzes electron transfer from NADH through the respiratory chain, using ubiquinone as an electron acceptor. Part of the enzyme membrane arm which is embedded in the lipid bilayer and involved in proton translocation. The chain is NADH-ubiquinone oxidoreductase chain 4L (MT-ND4L) from Phodopus sungorus (Striped hairy-footed hamster).